Reading from the N-terminus, the 2513-residue chain is Probable polyketide synthase 7 (2513 aa).

In terms of domain architecture, Ketosynthase family 3 (KS3) spans 11–441; it reads EKGVAIVGIG…GSNCCLLISE (431 aa). Residues Cys-181, His-323, and His-362 each act as for beta-ketoacyl synthase activity in the active site. The segment at 632-665 is acyl/malonyl transferase; that stretch reads GVNPSFILGHSLGEISASYCSGMIDLDTFCYTVY. Ser-642 serves as the catalytic For acyl/malonyl transferase activity. The interval 922–1044 is N-terminal hotdog fold; it reads IDHLGISNSF…SNFQLLDHGN (123 aa). A PKS/mFAS DH domain is found at 922-1206; that stretch reads IDHLGISNSF…CKSLIPIKDS (285 aa). The Proton acceptor; for dehydratase activity role is filled by His-956. Positions 1061-1206 are C-terminal hotdog fold; the sequence is NLSKLTKNEL…CKSLIPIKDS (146 aa). The Proton donor; for dehydratase activity role is filled by Asp-1119. The Carrier domain occupies 2426–2503; it reads IGNKNIDELF…ISIKMILNSL (78 aa). An O-(pantetheine 4'-phosphoryl)serine modification is found at Ser-2463.

The cofactor is pantetheine 4'-phosphate.

Functionally, probable polyketide synthase. The chain is Probable polyketide synthase 7 (pks7) from Dictyostelium discoideum (Social amoeba).